Here is a 446-residue protein sequence, read N- to C-terminus: Tektin-4 (446 aa).

3 coiled-coil regions span residues 182–215, 297–346, and 378–422; these read IRNV…MDYS, DAIA…NDKS, and SEVG…ANSI.

Belongs to the tektin family.

The protein resides in the cytoplasm. It localises to the cytoskeleton. Its subcellular location is the cilium axoneme. The protein localises to the cell projection. It is found in the cilium. The protein resides in the flagellum. Functionally, microtubule inner protein (MIP) part of the dynein-decorated doublet microtubules (DMTs) in cilia and flagellar axoneme. Forms filamentous polymers in the walls of ciliary and flagellar microtubules. Contributes to normal sperm motility. In Xenopus laevis (African clawed frog), this protein is Tektin-4 (tekt4).